A 591-amino-acid chain; its full sequence is Oligopeptide-binding protein OppA (591 aa).

This sequence belongs to the bacterial solute-binding protein 5 family. The complex is composed of an ATP-binding protein (OppD), two transmembrane proteins (OppB and OppC) and a solute-binding protein (OppA).

Its subcellular location is the periplasm. Part of the ABC transporter complex OppABCD involved in the uptake of oligopeptides. Peptide-binding protein that shows broad specificity but a moderate preference for hydrophobic oligopeptides and those that are 6-16 amino acids long. This Mycobacterium bovis (strain ATCC BAA-935 / AF2122/97) protein is Oligopeptide-binding protein OppA.